The primary structure comprises 291 residues: Elongation factor Ts (291 aa).

The segment at 79–82 is involved in Mg(2+) ion dislocation from EF-Tu; sequence TDFV.

Belongs to the EF-Ts family.

It localises to the cytoplasm. Functionally, associates with the EF-Tu.GDP complex and induces the exchange of GDP to GTP. It remains bound to the aminoacyl-tRNA.EF-Tu.GTP complex up to the GTP hydrolysis stage on the ribosome. This is Elongation factor Ts from Anaplasma marginale (strain St. Maries).